The chain runs to 122 residues: Large ribosomal subunit protein uL18 (122 aa).

The interval 1–20 (MFKKVSKNANRLSRHQRVRN) is disordered.

Belongs to the universal ribosomal protein uL18 family. In terms of assembly, part of the 50S ribosomal subunit; part of the 5S rRNA/L5/L18/L25 subcomplex. Contacts the 5S and 23S rRNAs.

In terms of biological role, this is one of the proteins that bind and probably mediate the attachment of the 5S RNA into the large ribosomal subunit, where it forms part of the central protuberance. In Alkaliphilus oremlandii (strain OhILAs) (Clostridium oremlandii (strain OhILAs)), this protein is Large ribosomal subunit protein uL18.